Reading from the N-terminus, the 261-residue chain is Cytochrome c oxidase subunit 3 (261 aa).

At 1–15 (MTHQTHACHMVNPSP) the chain is on the mitochondrial matrix side. A helical transmembrane segment spans residues 16-34 (WPLTGALSGLLMTSGLIMW). Residues 35–40 (FHFNST) lie on the Mitochondrial intermembrane side of the membrane. A helical transmembrane segment spans residues 41 to 66 (TLLMLGLTTNMLTMYQWWRDVIREST). The Mitochondrial matrix segment spans residues 67–72 (FQGHHT). The helical transmembrane segment at 73–105 (PNVQKGLRYGMILFIISEVLFFTGFFWAFYHSS) threads the bilayer. The Mitochondrial intermembrane portion of the chain corresponds to 106–128 (LAPTPELGGCWPPTGIHPLNPLE). Residues 129 to 152 (VPLLNTSVLLASGVSITWAHHSLM) form a helical membrane-spanning segment. Residues 153–155 (EGN) lie on the Mitochondrial matrix side of the membrane. A helical membrane pass occupies residues 156-183 (RNHMLQALFITIALGVYFTLLQASEYYE). At 184 to 190 (APFTISD) the chain is on the mitochondrial intermembrane side. The chain crosses the membrane as a helical span at residues 191–223 (GVYGSTFFVATGFHGLHVIIGSTFLIVCFFRQL). The Mitochondrial matrix portion of the chain corresponds to 224-232 (KFHFTSSHH). Residues 233 to 256 (FGFEAAAWYWHFVDVVWLFLYVSI) form a helical membrane-spanning segment. Residues 257–261 (YWWGS) are Mitochondrial intermembrane-facing.

This sequence belongs to the cytochrome c oxidase subunit 3 family. Component of the cytochrome c oxidase (complex IV, CIV), a multisubunit enzyme composed of 14 subunits. The complex is composed of a catalytic core of 3 subunits MT-CO1, MT-CO2 and MT-CO3, encoded in the mitochondrial DNA, and 11 supernumerary subunits COX4I, COX5A, COX5B, COX6A, COX6B, COX6C, COX7A, COX7B, COX7C, COX8 and NDUFA4, which are encoded in the nuclear genome. The complex exists as a monomer or a dimer and forms supercomplexes (SCs) in the inner mitochondrial membrane with NADH-ubiquinone oxidoreductase (complex I, CI) and ubiquinol-cytochrome c oxidoreductase (cytochrome b-c1 complex, complex III, CIII), resulting in different assemblies (supercomplex SCI(1)III(2)IV(1) and megacomplex MCI(2)III(2)IV(2)).

It is found in the mitochondrion inner membrane. It catalyses the reaction 4 Fe(II)-[cytochrome c] + O2 + 8 H(+)(in) = 4 Fe(III)-[cytochrome c] + 2 H2O + 4 H(+)(out). Its function is as follows. Component of the cytochrome c oxidase, the last enzyme in the mitochondrial electron transport chain which drives oxidative phosphorylation. The respiratory chain contains 3 multisubunit complexes succinate dehydrogenase (complex II, CII), ubiquinol-cytochrome c oxidoreductase (cytochrome b-c1 complex, complex III, CIII) and cytochrome c oxidase (complex IV, CIV), that cooperate to transfer electrons derived from NADH and succinate to molecular oxygen, creating an electrochemical gradient over the inner membrane that drives transmembrane transport and the ATP synthase. Cytochrome c oxidase is the component of the respiratory chain that catalyzes the reduction of oxygen to water. Electrons originating from reduced cytochrome c in the intermembrane space (IMS) are transferred via the dinuclear copper A center (CU(A)) of subunit 2 and heme A of subunit 1 to the active site in subunit 1, a binuclear center (BNC) formed by heme A3 and copper B (CU(B)). The BNC reduces molecular oxygen to 2 water molecules using 4 electrons from cytochrome c in the IMS and 4 protons from the mitochondrial matrix. This Gazella saudiya (Saudi gazelle) protein is Cytochrome c oxidase subunit 3 (MT-CO3).